Here is a 231-residue protein sequence, read N- to C-terminus: Very-long-chain (3R)-3-hydroxyacyl-CoA dehydratase 4 (231 aa).

Residues 1-19 (MGPVALPTWLQPRYRKNAY) lie on the Cytoplasmic side of the membrane. The chain crosses the membrane as a helical span at residues 20–40 (LFIYYLIQFCGHSWIFTNMTV). Residues 41-56 (RFFSFGKDSMVDTFYA) lie on the Lumenal side of the membrane. Residues 57–77 (IGLVMQLCQSISLLELLHIYV) form a helical membrane-spanning segment. The Cytoplasmic segment spans residues 78–112 (GIESNHLLPRILQLTERIIVLFMVITSQEEVQEKY). The chain crosses the membrane as a helical span at residues 113 to 133 (VVCVLFIFRNLLDMVRYTYSM). At 134–135 (LS) the chain is on the lumenal side. The helical transmembrane segment at 136-156 (VIGISYAVLTWFSQTLWMPIY) threads the bilayer. Tyrosine 156 is a catalytic residue. Residue proline 157 is a topological domain, cytoplasmic. A helical membrane pass occupies residues 158 to 178 (LCVLAEAFTIYQSLPYFESFG). Residue glutamate 163 is part of the active site. Over 179–189 (TYSTKLPFDLS) the chain is Lumenal. The helical transmembrane segment at 190-210 (FYFPYVLKIYLMMLFVGMYFT) threads the bilayer. Over 211-231 (YNHLYSERRDILRVFPNKKKM) the chain is Cytoplasmic.

The protein belongs to the very long-chain fatty acids dehydratase HACD family. As to quaternary structure, may interact with enzymes of the ELO family (including ELOVL1); with those enzymes that mediate condensation, the first of the four steps of the reaction cycle responsible for fatty acids elongation, may be part of a larger fatty acids elongase complex.

Its subcellular location is the endoplasmic reticulum membrane. The enzyme catalyses a very-long-chain (3R)-3-hydroxyacyl-CoA = a very-long-chain (2E)-enoyl-CoA + H2O. The catalysed reaction is (3R)-hydroxyhexadecanoyl-CoA = (2E)-hexadecenoyl-CoA + H2O. It functions in the pathway lipid metabolism; fatty acid biosynthesis. In terms of biological role, catalyzes the third of the four reactions of the long-chain fatty acids elongation cycle. This endoplasmic reticulum-bound enzymatic process, allows the addition of two carbons to the chain of long- and very long-chain fatty acids/VLCFAs per cycle. This enzyme catalyzes the dehydration of the 3-hydroxyacyl-CoA intermediate into trans-2,3-enoyl-CoA, within each cycle of fatty acid elongation. Thereby, it participates in the production of VLCFAs of different chain lengths that are involved in multiple biological processes as precursors of membrane lipids and lipid mediators. The polypeptide is Very-long-chain (3R)-3-hydroxyacyl-CoA dehydratase 4 (Bos taurus (Bovine)).